Consider the following 108-residue polypeptide: Nucleoid-associated protein BAV0915 (108 aa).

This sequence belongs to the YbaB/EbfC family. As to quaternary structure, homodimer.

Its subcellular location is the cytoplasm. The protein localises to the nucleoid. Binds to DNA and alters its conformation. May be involved in regulation of gene expression, nucleoid organization and DNA protection. This chain is Nucleoid-associated protein BAV0915, found in Bordetella avium (strain 197N).